The following is a 190-amino-acid chain: Holliday junction branch migration complex subunit RuvA (190 aa).

The tract at residues 1–64 (MIGRISGQLA…EDAQILYGFG (64 aa)) is domain I. The tract at residues 65-137 (SATERAAFRQ…LKGKLGADIG (73 aa)) is domain II. Positions 137-141 (GVQVS) are flexible linker. Residues 142–190 (VSSDSQSDILQALVALGYSDRDAALALKALPKDIGVSDGIKLALKALAK) are domain III.

It belongs to the RuvA family. As to quaternary structure, homotetramer. Forms an RuvA(8)-RuvB(12)-Holliday junction (HJ) complex. HJ DNA is sandwiched between 2 RuvA tetramers; dsDNA enters through RuvA and exits via RuvB. An RuvB hexamer assembles on each DNA strand where it exits the tetramer. Each RuvB hexamer is contacted by two RuvA subunits (via domain III) on 2 adjacent RuvB subunits; this complex drives branch migration. In the full resolvosome a probable DNA-RuvA(4)-RuvB(12)-RuvC(2) complex forms which resolves the HJ.

It is found in the cytoplasm. The RuvA-RuvB-RuvC complex processes Holliday junction (HJ) DNA during genetic recombination and DNA repair, while the RuvA-RuvB complex plays an important role in the rescue of blocked DNA replication forks via replication fork reversal (RFR). RuvA specifically binds to HJ cruciform DNA, conferring on it an open structure. The RuvB hexamer acts as an ATP-dependent pump, pulling dsDNA into and through the RuvAB complex. HJ branch migration allows RuvC to scan DNA until it finds its consensus sequence, where it cleaves and resolves the cruciform DNA. The sequence is that of Holliday junction branch migration complex subunit RuvA from Polaromonas sp. (strain JS666 / ATCC BAA-500).